The chain runs to 106 residues: Iron-sulfur cluster assembly protein CyaY (106 aa).

Belongs to the frataxin family.

In terms of biological role, involved in iron-sulfur (Fe-S) cluster assembly. May act as a regulator of Fe-S biogenesis. The polypeptide is Iron-sulfur cluster assembly protein CyaY (Yersinia pseudotuberculosis serotype O:3 (strain YPIII)).